Here is a 305-residue protein sequence, read N- to C-terminus: MIVRQLWCSRGSTSHLCAAVRLNWRSPKMTRPSSDLTAFREHFAKAKHIAIITGAGVSAESGVPTFRGPGGFWRKWQAQDLATPEAFSRDPSLVWEFYHYRREVMRSKMPNPAHLAIAECEARLGQQGRSVVIITQNIDELHHRAGSKHVYEIHGSLFKTRCMSCGEVKANHKSPICPALDGKGAPDPNTKEARIPVELLPRCERKSCNGLLRPHVVWFGETLDSDILTAVERELEKCDLCLVVGTSSIVYPAAMFAPQVASRGVPVAEFNMECTPATQRFKYHFEGPCGSTLPPALERHESEAV.

A mitochondrion-targeting transit peptide spans methionine 1–proline 32. The Deacetylase sirtuin-type domain occupies serine 33–glutamate 303. Glycine 54 to tryptophan 73 contributes to the NAD(+) binding site. Substrate-binding residues include tyrosine 98 and arginine 101. Glutamine 136–aspartate 139 serves as a coordination point for NAD(+). Histidine 154 functions as the Proton acceptor in the catalytic mechanism. Positions 162, 165, 203, and 208 each coordinate Zn(2+). NAD(+) is bound by residues glycine 245–serine 247, asparagine 271–glutamate 273, and cysteine 289.

This sequence belongs to the sirtuin family. Class III subfamily. Requires Zn(2+) as cofactor.

Its subcellular location is the mitochondrion. The protein resides in the cytoplasm. It localises to the cytosol. The protein localises to the nucleus. The enzyme catalyses N(6)-malonyl-L-lysyl-[protein] + NAD(+) + H2O = 2''-O-malonyl-ADP-D-ribose + nicotinamide + L-lysyl-[protein]. The catalysed reaction is N(6)-succinyl-L-lysyl-[protein] + NAD(+) + H2O = 2''-O-succinyl-ADP-D-ribose + nicotinamide + L-lysyl-[protein]. It catalyses the reaction N(6)-glutaryl-L-lysyl-[protein] + NAD(+) + H2O = 2''-O-glutaryl-ADP-D-ribose + nicotinamide + L-lysyl-[protein]. Its function is as follows. NAD-dependent lysine demalonylase, desuccinylase and deglutarylase that specifically removes malonyl, succinyl and glutaryl groups on target proteins. Has weak NAD-dependent protein deacetylase activity; however this activity may not be physiologically relevant in vivo. The chain is NAD-dependent protein deacylase sirtuin-5, mitochondrial (sirt5) from Danio rerio (Zebrafish).